A 439-amino-acid polypeptide reads, in one-letter code: Chromosomal replication initiator protein DnaA (439 aa).

The tract at residues 1-75 (MESWSRCLER…GIREVVLAIG (75 aa)) is domain I, interacts with DnaA modulators. Residues 75-101 (GSRPKTTELTVPVDTTGRLSQTVPFNG) form a domain II region. The domain III, AAA+ region stretch occupies residues 102 to 319 (NLDTHYNFDN…GALNTLVARA (218 aa)). The ATP site is built by Gly-147, Gly-149, Lys-150, and Thr-151. Residues 320–439 (NFTGRAVTIE…WDKLMRKFSE (120 aa)) are domain IV, binds dsDNA.

The protein belongs to the DnaA family. Oligomerizes as a right-handed, spiral filament on DNA at oriC.

Its subcellular location is the cytoplasm. Plays an essential role in the initiation and regulation of chromosomal replication. ATP-DnaA binds to the origin of replication (oriC) to initiate formation of the DNA replication initiation complex once per cell cycle. Binds the DnaA box (a 9 base pair repeat at the origin) and separates the double-stranded (ds)DNA. Forms a right-handed helical filament on oriC DNA; dsDNA binds to the exterior of the filament while single-stranded (ss)DNA is stabiized in the filament's interior. The ATP-DnaA-oriC complex binds and stabilizes one strand of the AT-rich DNA unwinding element (DUE), permitting loading of DNA polymerase. After initiation quickly degrades to an ADP-DnaA complex that is not apt for DNA replication. Binds acidic phospholipids. The polypeptide is Chromosomal replication initiator protein DnaA (Xylella fastidiosa (strain Temecula1 / ATCC 700964)).